We begin with the raw amino-acid sequence, 1131 residues long: Kinesin-like protein CG14535 (1131 aa).

Over residues 1 to 11 (MATTSTSNMSR) the composition is skewed to polar residues. A disordered region spans residues 1–25 (MATTSTSNMSRNGGFCGALQRAPPP). Residues 44 to 396 (KVKVMLRVAD…IQIASRIHRL (353 aa)) enclose the Kinesin motor domain. Disordered stretches follow at residues 472–494 (ALKGSGLEKPPSKSASNSPMMMK), 693–753 (DLPD…SRDI), 905–926 (PAYRLTPSPPKQPSHSPSQGSL), and 1016–1072 (TSSE…QRHR). The span at 483 to 494 (SKSASNSPMMMK) shows a compositional bias: low complexity. The segment covering 1016 to 1032 (TSSEAYDSGHDSNSTPR) has biased composition (polar residues).

It belongs to the TRAFAC class myosin-kinesin ATPase superfamily. Kinesin family. KIF26 subfamily.

Its subcellular location is the cytoplasm. The protein localises to the cytoskeleton. This Drosophila melanogaster (Fruit fly) protein is Kinesin-like protein CG14535.